Reading from the N-terminus, the 461-residue chain is Argininosuccinate lyase (461 aa).

It belongs to the lyase 1 family. Argininosuccinate lyase subfamily.

The protein localises to the cytoplasm. It catalyses the reaction 2-(N(omega)-L-arginino)succinate = fumarate + L-arginine. The protein operates within amino-acid biosynthesis; L-arginine biosynthesis; L-arginine from L-ornithine and carbamoyl phosphate: step 3/3. The chain is Argininosuccinate lyase from Shewanella piezotolerans (strain WP3 / JCM 13877).